Reading from the N-terminus, the 232-residue chain is Phosphoribosylaminoimidazole-succinocarboxamide synthase (232 aa).

The protein belongs to the SAICAR synthetase family.

The catalysed reaction is 5-amino-1-(5-phospho-D-ribosyl)imidazole-4-carboxylate + L-aspartate + ATP = (2S)-2-[5-amino-1-(5-phospho-beta-D-ribosyl)imidazole-4-carboxamido]succinate + ADP + phosphate + 2 H(+). The protein operates within purine metabolism; IMP biosynthesis via de novo pathway; 5-amino-1-(5-phospho-D-ribosyl)imidazole-4-carboxamide from 5-amino-1-(5-phospho-D-ribosyl)imidazole-4-carboxylate: step 1/2. The sequence is that of Phosphoribosylaminoimidazole-succinocarboxamide synthase from Finegoldia magna (strain ATCC 29328 / DSM 20472 / WAL 2508) (Peptostreptococcus magnus).